A 102-amino-acid chain; its full sequence is Glutaredoxin (102 aa).

The Glutaredoxin domain occupies 3-102; it reads MTKTKELVSS…VPLLTEAGAV (100 aa). C23 and C26 form a disulfide bridge.

It belongs to the glutaredoxin family. CPYC subfamily.

It localises to the cytoplasm. In terms of biological role, has a glutathione-disulfide oxidoreductase activity in the presence of NADPH and glutathione reductase. Reduces low molecular weight disulfides and proteins. This chain is Glutaredoxin, found in Ricinus communis (Castor bean).